A 149-amino-acid polypeptide reads, in one-letter code: Transcriptional repressor NrdR (149 aa).

A zinc finger lies at 3–34; it reads CPFCSHPETQVVETRVAEDGDFVRRRRQCGAC. The region spanning 49–139 is the ATP-cone domain; sequence PNVVKKDGRR…VYRNFEDIDE (91 aa).

The protein belongs to the NrdR family. The cofactor is Zn(2+).

Its function is as follows. Negatively regulates transcription of bacterial ribonucleotide reductase nrd genes and operons by binding to NrdR-boxes. This Paracidovorax citrulli (strain AAC00-1) (Acidovorax citrulli) protein is Transcriptional repressor NrdR.